The chain runs to 430 residues: UDP-N-acetylmuramoylalanine--D-glutamate ligase (430 aa).

105 to 111 lines the ATP pocket; it reads GSNGKTT.

This sequence belongs to the MurCDEF family.

The protein resides in the cytoplasm. It catalyses the reaction UDP-N-acetyl-alpha-D-muramoyl-L-alanine + D-glutamate + ATP = UDP-N-acetyl-alpha-D-muramoyl-L-alanyl-D-glutamate + ADP + phosphate + H(+). The protein operates within cell wall biogenesis; peptidoglycan biosynthesis. In terms of biological role, cell wall formation. Catalyzes the addition of glutamate to the nucleotide precursor UDP-N-acetylmuramoyl-L-alanine (UMA). The protein is UDP-N-acetylmuramoylalanine--D-glutamate ligase of Pseudothermotoga lettingae (strain ATCC BAA-301 / DSM 14385 / NBRC 107922 / TMO) (Thermotoga lettingae).